A 424-amino-acid polypeptide reads, in one-letter code: Enolase (424 aa).

Residue glutamine 165 participates in (2R)-2-phosphoglycerate binding. Catalysis depends on glutamate 207, which acts as the Proton donor. Residues aspartate 244, glutamate 283, and aspartate 310 each contribute to the Mg(2+) site. Residues lysine 335, arginine 364, serine 365, and lysine 386 each contribute to the (2R)-2-phosphoglycerate site. The active-site Proton acceptor is lysine 335.

This sequence belongs to the enolase family. Mg(2+) serves as cofactor.

It is found in the cytoplasm. The protein localises to the secreted. It localises to the cell surface. The catalysed reaction is (2R)-2-phosphoglycerate = phosphoenolpyruvate + H2O. Its pathway is carbohydrate degradation; glycolysis; pyruvate from D-glyceraldehyde 3-phosphate: step 4/5. Functionally, catalyzes the reversible conversion of 2-phosphoglycerate (2-PG) into phosphoenolpyruvate (PEP). It is essential for the degradation of carbohydrates via glycolysis. This chain is Enolase, found in Chlamydia felis (strain Fe/C-56) (Chlamydophila felis).